A 557-amino-acid chain; its full sequence is Dihydroxy-acid dehydratase (557 aa).

Asp78 serves as a coordination point for Mg(2+). [2Fe-2S] cluster is bound at residue Cys119. Residues Asp120 and Lys121 each contribute to the Mg(2+) site. Lys121 is modified (N6-carboxylysine). Cys192 contacts [2Fe-2S] cluster. Glu442 is a Mg(2+) binding site. Catalysis depends on Ser468, which acts as the Proton acceptor.

It belongs to the IlvD/Edd family. Homodimer. [2Fe-2S] cluster serves as cofactor. It depends on Mg(2+) as a cofactor.

It catalyses the reaction (2R)-2,3-dihydroxy-3-methylbutanoate = 3-methyl-2-oxobutanoate + H2O. The enzyme catalyses (2R,3R)-2,3-dihydroxy-3-methylpentanoate = (S)-3-methyl-2-oxopentanoate + H2O. Its pathway is amino-acid biosynthesis; L-isoleucine biosynthesis; L-isoleucine from 2-oxobutanoate: step 3/4. It participates in amino-acid biosynthesis; L-valine biosynthesis; L-valine from pyruvate: step 3/4. In terms of biological role, functions in the biosynthesis of branched-chain amino acids. Catalyzes the dehydration of (2R,3R)-2,3-dihydroxy-3-methylpentanoate (2,3-dihydroxy-3-methylvalerate) into 2-oxo-3-methylpentanoate (2-oxo-3-methylvalerate) and of (2R)-2,3-dihydroxy-3-methylbutanoate (2,3-dihydroxyisovalerate) into 2-oxo-3-methylbutanoate (2-oxoisovalerate), the penultimate precursor to L-isoleucine and L-valine, respectively. This is Dihydroxy-acid dehydratase from Bacillus thuringiensis subsp. konkukian (strain 97-27).